Here is a 229-residue protein sequence, read N- to C-terminus: MGILAALDLHPYTLVVSSFTVLLIQQLVGFIGKSTIQEFAWLFYLRVGGKLGLSNSFVAHTKKQEELHKLNREKRSISAQDEYAKWTKLNRQAEKLTAEVKSLSDDIAKDKSKINSLVGVVLLFLTTLPLWVFRLWFRKSVLFYLPTGVFPYYVERVLAIPFFASGSVGLTVWMFAVNNVISSVLFLLTFPFKPSVPIPIRQTKVEEVVPESAESKESSPEVIDIADAN.

Topologically, residues 1–14 are lumenal; that stretch reads MGILAALDLHPYTL. Residues 15-34 form a helical membrane-spanning segment; that stretch reads VVSSFTVLLIQQLVGFIGKS. The Cytoplasmic portion of the chain corresponds to 35 to 122; sequence TIQEFAWLFY…KINSLVGVVL (88 aa). A coiled-coil region spans residues 60–117; sequence HTKKQEELHKLNREKRSISAQDEYAKWTKLNRQAEKLTAEVKSLSDDIAKDKSKINSL. Residues 123 to 143 form a helical membrane-spanning segment; the sequence is LFLTTLPLWVFRLWFRKSVLF. The Lumenal portion of the chain corresponds to 144-167; the sequence is YLPTGVFPYYVERVLAIPFFASGS. The chain crosses the membrane as a helical span at residues 168 to 184; it reads VGLTVWMFAVNNVISSV. Over 185–229 the chain is Cytoplasmic; the sequence is LFLLTFPFKPSVPIPIRQTKVEEVVPESAESKESSPEVIDIADAN. Residues 210–219 show a composition bias toward basic and acidic residues; sequence PESAESKESS. The tract at residues 210–229 is disordered; it reads PESAESKESSPEVIDIADAN.

This sequence belongs to the WRB/GET1 family. As to quaternary structure, component of the Golgi to ER traffic (GET) complex, which is composed of GET1, GET2 and GET3. Within the complex, GET1 and GET2 form a heterotetramer which is stabilized by phosphatidylinositol binding and which binds to the GET3 homodimer.

It is found in the endoplasmic reticulum membrane. The protein localises to the golgi apparatus membrane. Required for the post-translational delivery of tail-anchored (TA) proteins to the endoplasmic reticulum. Together with GET2, acts as a membrane receptor for soluble GET3, which recognizes and selectively binds the transmembrane domain of TA proteins in the cytosol. The GET complex cooperates with the HDEL receptor ERD2 to mediate the ATP-dependent retrieval of resident ER proteins that contain a C-terminal H-D-E-L retention signal from the Golgi to the ER. This is Golgi to ER traffic protein 1 from Scheffersomyces stipitis (strain ATCC 58785 / CBS 6054 / NBRC 10063 / NRRL Y-11545) (Yeast).